We begin with the raw amino-acid sequence, 110 residues long: Protein YcgL (110 aa).

Residues 14–98 enclose the YcgL domain; that stretch reads MFCVIYRSSK…PPEDLLKQHL (85 aa). Residues 87 to 110 are disordered; it reads PPPPEDLLKQHLSSVGQNTSSADR. Positions 97–110 are enriched in polar residues; the sequence is HLSSVGQNTSSADR.

This Salmonella newport (strain SL254) protein is Protein YcgL.